The chain runs to 40 residues: Accessory gland-specific peptide 57Db (40 aa).

An N-terminal signal peptide occupies residues Met1–Ala17.

As to expression, lumen fluid of male accessory glands, becomes seminal fluid.

The protein resides in the secreted. In terms of biological role, transferred from male to female during mating and may affect egglaying and behavior after mating. The chain is Accessory gland-specific peptide 57Db (Mst57Db) from Drosophila melanogaster (Fruit fly).